Reading from the N-terminus, the 85-residue chain is Fungal defensin triintsin (85 aa).

The signal sequence occupies residues 1–21 (MQFTKLATVLIVSLMGSAAIA). A propeptide spanning residues 22 to 47 (APSVDNAPAVAAEEVAAAPAENLEKR) is cleaved from the precursor. 3 disulfides stabilise this stretch: cysteine 51–cysteine 72, cysteine 58–cysteine 80, and cysteine 62–cysteine 82.

The protein belongs to the invertebrate defensin family. Disulfide bonds are essential for antimicrobial activity.

It localises to the secreted. In terms of biological role, antimicrobial peptide with broad-spectrum activity against Gram-positive bacteria, Gram-negative bacteria, and fungi. Also inhibits clinical isolates, including methicillin-resistant S.aureus (MRSA) (MIC=32 uM), K.pneumoniae, C.albicans and C.parapsilosis. Displays minimal inhibitory concentration (MIC) values similar to minimal bactericidal concentrations (MBC), suggesting a disruptive mechanism mode of action associated with membrane lysis. In vitro, shows hemolytic activity against human red blood cells. The polypeptide is Fungal defensin triintsin (Trichophyton interdigitale (strain MR816)).